The following is a 95-amino-acid chain: Co-chaperonin GroES (95 aa).

This sequence belongs to the GroES chaperonin family. Heptamer of 7 subunits arranged in a ring. Interacts with the chaperonin GroEL.

Its subcellular location is the cytoplasm. Functionally, together with the chaperonin GroEL, plays an essential role in assisting protein folding. The GroEL-GroES system forms a nano-cage that allows encapsulation of the non-native substrate proteins and provides a physical environment optimized to promote and accelerate protein folding. GroES binds to the apical surface of the GroEL ring, thereby capping the opening of the GroEL channel. This Dichelobacter nodosus (strain VCS1703A) protein is Co-chaperonin GroES.